The chain runs to 474 residues: ATP synthase subunit beta (474 aa).

Position 153–160 (153–160) interacts with ATP; it reads GGAGVGKT.

The protein belongs to the ATPase alpha/beta chains family. In terms of assembly, F-type ATPases have 2 components, CF(1) - the catalytic core - and CF(0) - the membrane proton channel. CF(1) has five subunits: alpha(3), beta(3), gamma(1), delta(1), epsilon(1). CF(0) has three main subunits: a(1), b(2) and c(9-12). The alpha and beta chains form an alternating ring which encloses part of the gamma chain. CF(1) is attached to CF(0) by a central stalk formed by the gamma and epsilon chains, while a peripheral stalk is formed by the delta and b chains.

Its subcellular location is the cell inner membrane. It catalyses the reaction ATP + H2O + 4 H(+)(in) = ADP + phosphate + 5 H(+)(out). In terms of biological role, produces ATP from ADP in the presence of a proton gradient across the membrane. The catalytic sites are hosted primarily by the beta subunits. This is ATP synthase subunit beta from Rickettsia prowazekii (strain Madrid E).